Consider the following 333-residue polypeptide: Adenosine deaminase (333 aa).

Zn(2+) is bound by residues His-12 and His-14. Residues His-14, Asp-16, and Gly-170 each contribute to the substrate site. Residue His-197 participates in Zn(2+) binding. Glu-200 serves as the catalytic Proton donor. Zn(2+) is bound at residue Asp-278. Asp-279 is a substrate binding site.

It belongs to the metallo-dependent hydrolases superfamily. Adenosine and AMP deaminases family. Adenosine deaminase subfamily. The cofactor is Zn(2+).

It carries out the reaction adenosine + H2O + H(+) = inosine + NH4(+). The catalysed reaction is 2'-deoxyadenosine + H2O + H(+) = 2'-deoxyinosine + NH4(+). Catalyzes the hydrolytic deamination of adenosine and 2-deoxyadenosine. This Photorhabdus laumondii subsp. laumondii (strain DSM 15139 / CIP 105565 / TT01) (Photorhabdus luminescens subsp. laumondii) protein is Adenosine deaminase.